The primary structure comprises 622 residues: Low affinity potassium transport system protein Kup (622 aa).

The next 12 helical transmembrane spans lie at 9–29 (LPAVTLAAIGVVYGDIGTSPL), 49–69 (VFGFLSLIFWLLVLVVSLKYL), 101–121 (VLVIMGLIGGSFFYGEVVITP), 137–157 (PSMDSYIVPLSIVVLTLLFII), 165–185 (VGKLFAPVMLIWFLTLGVLGA), 212–232 (AVSFFALGAVVLAITGVEALY), 247–267 (WFTVVLPSLVLNYFGQGALLL), 279–299 (LLAPDWALIPLMILATLATII), 337–357 (IYIPAINWMLYIAVVIVIVSF), 363–383 (LAAAYGIAVTGTMVITSILFC), 397–417 (AWVLLAGLLVIDVPMFLANVV), and 419–439 (ILSGGWLPLALGMVMFIIMTT).

This sequence belongs to the HAK/KUP transporter (TC 2.A.72) family.

It localises to the cell inner membrane. It carries out the reaction K(+)(in) + H(+)(in) = K(+)(out) + H(+)(out). Functionally, responsible for the low-affinity transport of potassium into the cell. Likely operates as a K(+):H(+) symporter. The polypeptide is Low affinity potassium transport system protein Kup (Pectobacterium carotovorum subsp. carotovorum (strain PC1)).